We begin with the raw amino-acid sequence, 957 residues long: ADAMTS-like protein 2 (957 aa).

Positions 1-29 (MDGRRQHPHWAWSLLAVAVVAGGAAPTEA) are cleaved as a signal peptide. The region spanning 47–106 (AYWWGEWTKWTACSRSCGGGVTSQERHCLQQRRKSVPGTGNRTCVGTSKRYQLCRVQECP) is the TSP type-1 1 domain. Disulfide bonds link cysteine 59-cysteine 100, cysteine 63-cysteine 105, and cysteine 74-cysteine 90. N-linked (GlcNAc...) asparagine glycans are attached at residues asparagine 87, asparagine 374, asparagine 435, asparagine 482, asparagine 518, asparagine 530, asparagine 539, and asparagine 550. Positions 532–544 (SSEAPFPNTSASP) are enriched in polar residues. Residues 532–568 (SSEAPFPNTSASPPNLAGNRTHKARTRPKARKQGVSP) form a disordered region. The segment covering 551-563 (RTHKARTRPKARK) has biased composition (basic residues). TSP type-1 domains follow at residues 570 to 624 (DMYR…EFCA), 628 to 692 (CQPR…PACG), 694 to 742 (QWEM…TGPP), 743 to 801 (CDRQ…KNCP), 803 to 857 (HWLA…TCFE), and 859 to 914 (PCFK…QPCP). Residue asparagine 737 is glycosylated (N-linked (GlcNAc...) asparagine). Asparagine 813 carries N-linked (GlcNAc...) asparagine glycosylation. The region spanning 918–956 (PDDSCQDQPGTNCALAIKVNLCGHWYYSKACCRSCRPPH) is the PLAC domain.

In terms of assembly, interacts with LTBP1. In terms of processing, glycosylated. Can be O-fucosylated by POFUT2 on a serine or a threonine residue found within the consensus sequence C1-X(2)-(S/T)-C2-G of the TSP type-1 repeat domains where C1 and C2 are the first and second cysteine residue of the repeat, respectively. Fucosylated repeats can then be further glycosylated by the addition of a beta-1,3-glucose residue by the glucosyltransferase, B3GALTL. Fucosylation mediates the efficient secretion of ADAMTS family members. Can also be C-glycosylated with one or two mannose molecules on tryptophan residues within the consensus sequence W-X-X-W of the TPRs, and N-glycosylated. These other glycosylations can also facilitate secretion.

It localises to the secreted. The chain is ADAMTS-like protein 2 (Adamtsl2) from Mus musculus (Mouse).